The following is a 417-amino-acid chain: Serine hydroxymethyltransferase 1 (417 aa).

(6S)-5,6,7,8-tetrahydrofolate-binding positions include Leu121 and 125–127 (GHL). Lys229 bears the N6-(pyridoxal phosphate)lysine mark. Residue 354-356 (SPF) participates in (6S)-5,6,7,8-tetrahydrofolate binding.

The protein belongs to the SHMT family. In terms of assembly, homodimer. Requires pyridoxal 5'-phosphate as cofactor.

It localises to the cytoplasm. The enzyme catalyses (6R)-5,10-methylene-5,6,7,8-tetrahydrofolate + glycine + H2O = (6S)-5,6,7,8-tetrahydrofolate + L-serine. It participates in one-carbon metabolism; tetrahydrofolate interconversion. The protein operates within amino-acid biosynthesis; glycine biosynthesis; glycine from L-serine: step 1/1. Its function is as follows. Catalyzes the reversible interconversion of serine and glycine with tetrahydrofolate (THF) serving as the one-carbon carrier. This reaction serves as the major source of one-carbon groups required for the biosynthesis of purines, thymidylate, methionine, and other important biomolecules. Also exhibits THF-independent aldolase activity toward beta-hydroxyamino acids, producing glycine and aldehydes, via a retro-aldol mechanism. This is Serine hydroxymethyltransferase 1 from Pseudomonas syringae pv. syringae (strain B728a).